We begin with the raw amino-acid sequence, 712 residues long: Polyribonucleotide nucleotidyltransferase (712 aa).

Mg(2+) is bound by residues Asp-485 and Asp-491. The KH domain maps to 552–611; it reads PKITTISVPKEKIRDVIGQGGKVIREIVEYSGAKIDINDDGTIMIAASSEDQATRAIERI. Positions 621 to 689 constitute an S1 motif domain; that stretch reads GAIYTGKVVK…DRGKVKLSMR (69 aa).

It belongs to the polyribonucleotide nucleotidyltransferase family. Mg(2+) is required as a cofactor.

It is found in the cytoplasm. It catalyses the reaction RNA(n+1) + phosphate = RNA(n) + a ribonucleoside 5'-diphosphate. Functionally, involved in mRNA degradation. Catalyzes the phosphorolysis of single-stranded polyribonucleotides processively in the 3'- to 5'-direction. This is Polyribonucleotide nucleotidyltransferase from Gluconacetobacter diazotrophicus (strain ATCC 49037 / DSM 5601 / CCUG 37298 / CIP 103539 / LMG 7603 / PAl5).